Here is a 131-residue protein sequence, read N- to C-terminus: Jacalin-related lectin 15 (131 aa).

The Jacalin-type lectin domain occupies 1–126; sequence MSTPSGSNPL…LTSLGAYFAP (126 aa).

This sequence belongs to the jacalin lectin family. As to expression, expressed in the vascular and surrounding tissues in cotyledons. Detected in root apical meristems.

In Arabidopsis thaliana (Mouse-ear cress), this protein is Jacalin-related lectin 15 (JAL15).